The primary structure comprises 557 residues: Formate--tetrahydrofolate ligase (557 aa).

Residue 65 to 72 coordinates ATP; it reads SPAGEGKT.

Belongs to the formate--tetrahydrofolate ligase family.

The catalysed reaction is (6S)-5,6,7,8-tetrahydrofolate + formate + ATP = (6R)-10-formyltetrahydrofolate + ADP + phosphate. The protein operates within one-carbon metabolism; tetrahydrofolate interconversion. This is Formate--tetrahydrofolate ligase from Methylobacillus flagellatus (strain ATCC 51484 / DSM 6875 / VKM B-1610 / KT).